A 1407-amino-acid chain; its full sequence is DNA-directed RNA polymerase subunit beta' (1407 aa).

The Zn(2+) site is built by cysteine 70, cysteine 72, cysteine 85, and cysteine 88. 3 residues coordinate Mg(2+): aspartate 460, aspartate 462, and aspartate 464. Positions 814, 889, 896, and 899 each coordinate Zn(2+). A disordered region spans residues 1384–1407; it reads LVGRSTSSGTEVTSPSKDAIPLGG. Polar residues predominate over residues 1386–1399; it reads GRSTSSGTEVTSPS.

Belongs to the RNA polymerase beta' chain family. In terms of assembly, the RNAP catalytic core consists of 2 alpha, 1 beta, 1 beta' and 1 omega subunit. When a sigma factor is associated with the core the holoenzyme is formed, which can initiate transcription. Mg(2+) is required as a cofactor. Zn(2+) serves as cofactor.

It catalyses the reaction RNA(n) + a ribonucleoside 5'-triphosphate = RNA(n+1) + diphosphate. Functionally, DNA-dependent RNA polymerase catalyzes the transcription of DNA into RNA using the four ribonucleoside triphosphates as substrates. The protein is DNA-directed RNA polymerase subunit beta' of Xylella fastidiosa (strain Temecula1 / ATCC 700964).